Here is a 427-residue protein sequence, read N- to C-terminus: 3-phosphoshikimate 1-carboxyvinyltransferase (427 aa).

Positions 22, 23, and 27 each coordinate 3-phosphoshikimate. A phosphoenolpyruvate-binding site is contributed by Lys22. Phosphoenolpyruvate is bound by residues Gly96 and Arg124. Residues Ser169, Ser170, Gln171, Ser197, Asp313, Asn336, and Lys340 each coordinate 3-phosphoshikimate. Residue Gln171 coordinates phosphoenolpyruvate. The Proton acceptor role is filled by Asp313. Phosphoenolpyruvate contacts are provided by Arg344, Arg386, and Lys411.

The protein belongs to the EPSP synthase family. Monomer.

Its subcellular location is the cytoplasm. It catalyses the reaction 3-phosphoshikimate + phosphoenolpyruvate = 5-O-(1-carboxyvinyl)-3-phosphoshikimate + phosphate. It functions in the pathway metabolic intermediate biosynthesis; chorismate biosynthesis; chorismate from D-erythrose 4-phosphate and phosphoenolpyruvate: step 6/7. In terms of biological role, catalyzes the transfer of the enolpyruvyl moiety of phosphoenolpyruvate (PEP) to the 5-hydroxyl of shikimate-3-phosphate (S3P) to produce enolpyruvyl shikimate-3-phosphate and inorganic phosphate. This chain is 3-phosphoshikimate 1-carboxyvinyltransferase, found in Salmonella paratyphi A (strain ATCC 9150 / SARB42).